The sequence spans 250 residues: NAD(P)H-quinone oxidoreductase subunit K (250 aa).

C60, C61, C125, and C156 together coordinate [4Fe-4S] cluster. A disordered region spans residues 230 to 250 (ELNTPEIDVSPASQSSSTYES). The segment covering 240-250 (PASQSSSTYES) has biased composition (polar residues).

Belongs to the complex I 20 kDa subunit family. As to quaternary structure, NDH-1 can be composed of about 15 different subunits; different subcomplexes with different compositions have been identified which probably have different functions. [4Fe-4S] cluster serves as cofactor.

Its subcellular location is the cellular thylakoid membrane. The enzyme catalyses a plastoquinone + NADH + (n+1) H(+)(in) = a plastoquinol + NAD(+) + n H(+)(out). It catalyses the reaction a plastoquinone + NADPH + (n+1) H(+)(in) = a plastoquinol + NADP(+) + n H(+)(out). In terms of biological role, NDH-1 shuttles electrons from an unknown electron donor, via FMN and iron-sulfur (Fe-S) centers, to quinones in the respiratory and/or the photosynthetic chain. The immediate electron acceptor for the enzyme in this species is believed to be plastoquinone. Couples the redox reaction to proton translocation, and thus conserves the redox energy in a proton gradient. Cyanobacterial NDH-1 also plays a role in inorganic carbon-concentration. The sequence is that of NAD(P)H-quinone oxidoreductase subunit K from Prochlorococcus marinus (strain MIT 9313).